Consider the following 193-residue polypeptide: Cysteine and glycine-rich protein 1 (193 aa).

In terms of domain architecture, LIM zinc-binding 1 spans 10–61; that stretch reads CGVCQKTVYFAEEVQCEGNSFHKSCFLCMVCKKNLDSTTVAVHGEEIYCKSC. A Nuclear localization signal motif is present at residues 64-69; the sequence is KKYGPK. Serine 81 is subject to Phosphoserine. N6-acetyllysine is present on lysine 84. Residue lysine 91 forms a Glycyl lysine isopeptide (Lys-Gly) (interchain with G-Cter in SUMO2) linkage. Lysine 112, lysine 131, lysine 137, and lysine 161 each carry N6-acetyllysine. Positions 119 to 170 constitute an LIM zinc-binding 2 domain; the sequence is CPRCSQAVYAAEKVIGAGKSWHKACFRCAKCGKGLESTTLADKDGEIYCKGC. Position 192 is a phosphoserine (serine 192).

In terms of assembly, interacts with ASCC1; ASCC2 and TRIP4.

Its subcellular location is the nucleus. In terms of biological role, could play a role in neuronal development. The protein is Cysteine and glycine-rich protein 1 (CSRP1) of Pongo abelii (Sumatran orangutan).